Here is a 419-residue protein sequence, read N- to C-terminus: RNA polymerase sigma factor sigD, chloroplastic (419 aa).

The transit peptide at 1-52 (MATTIPTTATATMCPSPPVPTISPLLRTTHQCQPSPSLSSPFSIKLSTALVC) directs the protein to the chloroplast. The short motif at 207 to 220 (DLIQEGSIGLLRGA) is the Polymerase core binding element. The segment at residues 377–396 (FEEIGKSLKLSRERVRQING) is a DNA-binding region (H-T-H motif).

It belongs to the sigma-70 factor family. As to expression, mostly expressed in leaves, and to a lesser extent in roots. Present in seedlings.

The protein localises to the plastid. It localises to the chloroplast. Functionally, sigma factors are initiation factors that promote the attachment of plastid-encoded RNA polymerase (PEP) to specific initiation sites and are then released. Regulates transcription of the ndhF gene which codes for a subunit of the plastid NDH [NAD(P)H dehydrogenase] complex. This is RNA polymerase sigma factor sigD, chloroplastic (SIGD) from Arabidopsis thaliana (Mouse-ear cress).